A 561-amino-acid polypeptide reads, in one-letter code: DNA ligase B (561 aa).

Catalysis depends on lysine 125, which acts as the N6-AMP-lysine intermediate.

The protein belongs to the NAD-dependent DNA ligase family. LigB subfamily.

The catalysed reaction is NAD(+) + (deoxyribonucleotide)n-3'-hydroxyl + 5'-phospho-(deoxyribonucleotide)m = (deoxyribonucleotide)n+m + AMP + beta-nicotinamide D-nucleotide.. Its function is as follows. Catalyzes the formation of phosphodiester linkages between 5'-phosphoryl and 3'-hydroxyl groups in double-stranded DNA using NAD as a coenzyme and as the energy source for the reaction. The polypeptide is DNA ligase B (Salmonella agona (strain SL483)).